Here is a 377-residue protein sequence, read N- to C-terminus: Deoxyribonuclease CdiA-o11 (377 aa).

Residues 81–84 carry the VENN CT cleavage motif motif; it reads VENN. Positions 85 to 233 are inner membrane translocation domain (IMTD), targets to YciB; the sequence is YLSTNQSLTF…ISFMSRNTAT (149 aa). Residues 88-377 form a CT domain, sufficient to interact with CdiI region; the sequence is TNQSLTFDKE…GVKVTVTQVK (290 aa). Positions 222 to 377 are has DNase activity in vivo, cannot be expressed in the absence of CdiI; the sequence is AAISFMSRNT…GVKVTVTQVK (156 aa). Catalysis depends on residues Glu257, Asp278, Ser289, and Lys291. The Zn(2+) site is built by Glu257 and Asp278.

As to quaternary structure, interacts with cognate immunity protein CdiI-o11-EC869, which blocks its toxic DNase activity. It depends on Zn(2+) as a cofactor.

Its subcellular location is the target cell. It localises to the target cell cytoplasm. Toxic component of a toxin-immunity protein module, which functions as a cellular contact-dependent growth inhibition (CDI) system. CDI modules allow bacteria to communicate with and inhibit the growth of closely related neighboring bacteria in a contact-dependent fashion. The C-terminal 289 residues (the CT fragment) has a strong DNase activity in the presence of Zn(2+), completely degrading supercoiled and linear plasmids, and inhibits growth. In the presence of Mg(2+) it nicks dsDNA. Toxic activity is neutralized by coexpression of the cognate immunity protein CdiI-o11-EC869, but not by non-cognate immunity proteins from other toxin-immunity modules or other strains of E.coli. Gains access to the cytoplasm of target cells by using integral inner membrane protein YciB. Functionally, expression of this locus confers protection against other bacteria carrying the locus. The sequence is that of Deoxyribonuclease CdiA-o11 (cdiA4) from Escherichia coli O157:H7 (strain EC869).